Here is a 373-residue protein sequence, read N- to C-terminus: mRNA export factor rae-1 (373 aa).

At Met-1 the chain carries N-acetylmethionine. WD repeat units lie at residues 40–82, 87–126, 128–169, and 276–315; these read APED…TFEG, NIPAPILDIAWIEDSSKIFIACADKEARLWDLASNQVAVV, THDG…NQTQ, and QEIYAVNDICFHPQHGTLVTIGSDGRYSMWDKDARTKLKT.

The protein belongs to the WD repeat rae1 family. As to quaternary structure, the nuclear pore complex (NPC) constitutes the exclusive means of nucleocytoplasmic transport. NPCs allow the passive diffusion of ions and small molecules and the active, nuclear transport receptor-mediated bidirectional transport of macromolecules such as proteins, RNAs, ribonucleoparticles (RNPs), and ribosomal subunits across the nuclear envelope. Interacts with rpm-1. As to expression, expressed along the ventral and dorsal nerve cords.

The protein resides in the nucleus. It is found in the nuclear pore complex. Its subcellular location is the cell projection. It localises to the axon. The protein localises to the synapse. Its function is as follows. Functions as a component of the nuclear pore complex (NPC). NPC components, collectively referred to as nucleoporins (NUPs), can play the role of both NPC structural components and of docking or interaction partners for transiently associated nuclear transport factors. It is specifically important for nuclear mRNA export. Has a role in neuronal development, where it acts downstream of rpm-1 to control axon termination and synapse formation in anterior lateral microtubule (ALM) and posterior lateral microtubule (PLM) mechanosensory neurons. The sequence is that of mRNA export factor rae-1 from Caenorhabditis elegans.